A 346-amino-acid chain; its full sequence is Autophagy-related protein 3 (346 aa).

The segment at 85–161 is flexible region; the sequence is DFAGDAGHEE…DDDDEAIIRA (77 aa). Cys-238 acts as the Glycyl thioester intermediate in catalysis. The tract at residues 242–322 is handle region; it reads SVMKTLLDRA…DQEVAIRVDQ (81 aa).

It belongs to the ATG3 family. As to quaternary structure, monomer. Interacts with apg-6/atg8 through an intermediate thioester bond through the C-terminal Gly of apg-6/atg8. Also interacts with the 40 amino acid C-terminal region of the E1-like apg-5/atg7 enzyme. Also interacts with the atg12-apg-4/atg5 conjugate.

The protein resides in the cytoplasm. E2 conjugating enzyme required for the cytoplasm to vacuole transport (Cvt) and autophagy. Required for selective autophagic degradation of the nucleus (nucleophagy) as well as for mitophagy which contributes to regulate mitochondrial quantity and quality by eliminating the mitochondria to a basal level to fulfill cellular energy requirements and preventing excess ROS production. Responsible for the E2-like covalent binding of phosphatidylethanolamine to the C-terminal Gly of apg-6/atg8. The atg12-apg-4/atg5 conjugate plays a role of an E3 and promotes the transfer of apg-6/atg8 from apg-3/atg3 to phosphatidylethanolamine (PE). This step is required for the membrane association of apg-6/atg8. The formation of the apg-6/atg8-phosphatidylethanolamine conjugate is essential for autophagy and for the cytoplasm to vacuole transport (Cvt). The apg-6/atg8-PE conjugate mediates tethering between adjacent membranes and stimulates membrane hemifusion, leading to expansion of the autophagosomal membrane during autophagy. The chain is Autophagy-related protein 3 (apg-3) from Neurospora crassa (strain ATCC 24698 / 74-OR23-1A / CBS 708.71 / DSM 1257 / FGSC 987).